The following is a 63-amino-acid chain: DNA gyrase inhibitor YacG (63 aa).

Residues cysteine 9, cysteine 12, cysteine 28, and cysteine 32 each contribute to the Zn(2+) site.

This sequence belongs to the DNA gyrase inhibitor YacG family. As to quaternary structure, interacts with GyrB. Zn(2+) serves as cofactor.

Functionally, inhibits all the catalytic activities of DNA gyrase by preventing its interaction with DNA. Acts by binding directly to the C-terminal domain of GyrB, which probably disrupts DNA binding by the gyrase. The sequence is that of DNA gyrase inhibitor YacG from Salmonella arizonae (strain ATCC BAA-731 / CDC346-86 / RSK2980).